A 354-amino-acid polypeptide reads, in one-letter code: Glucose 1-dehydrogenase (354 aa).

Residues 1–27 form a disordered region; that stretch reads MKVIGVTRDDDGPQLLERERPSPDPGE. Positions 7–22 are enriched in basic and acidic residues; that stretch reads TRDDDGPQLLERERPS. Asp38 serves as a coordination point for Zn(2+). A substrate-binding site is contributed by Thr40. Zn(2+)-binding residues include His63 and Glu64. Positions 91 to 110 are disordered; the sequence is PNGETNEYFRRGEPDMAPDG. Substrate is bound by residues Glu114 and Glu150. Zn(2+) is bound at residue Glu150. Residues 181-184, 204-205, 269-271, and 298-300 each bind NADP(+); these read NGSL, RR, LGI, and TVN. Asn300 lines the substrate pocket.

It belongs to the zinc-containing alcohol dehydrogenase family. Glucose 1-dehydrogenase subfamily. It depends on Zn(2+) as a cofactor.

The catalysed reaction is D-glucose + NAD(+) = D-glucono-1,5-lactone + NADH + H(+). The enzyme catalyses D-glucose + NADP(+) = D-glucono-1,5-lactone + NADPH + H(+). Functionally, catalyzes the NAD(P)(+)-dependent oxidation of D-glucose to D-gluconate via gluconolactone. Can utilize both NAD(+) and NADP(+) as electron acceptor. Is involved in the degradation of glucose through a modified Entner-Doudoroff pathway. The chain is Glucose 1-dehydrogenase from Haloarcula marismortui (strain ATCC 43049 / DSM 3752 / JCM 8966 / VKM B-1809) (Halobacterium marismortui).